A 70-amino-acid chain; its full sequence is Toxin Isom2 (70 aa).

One can recognise an LCN-type CS-alpha/beta domain in the interval 2 to 65 (KNGYAVDSSG…ISDTRKKYCD (64 aa)). Cystine bridges form between Cys16–Cys37, Cys22–Cys42, Cys26–Cys44, and Cys38–Cys64.

As to expression, expressed by the venom gland.

It is found in the secreted. Excitatory insect beta-toxins induce a spastic paralysis. They bind voltage-independently at site-4 of sodium channels (Nav) and shift the voltage of activation toward more negative potentials thereby affecting sodium channel activation and promoting spontaneous and repetitive firing. This Isometrus vittatus (Bark scorpion) protein is Toxin Isom2.